Here is a 386-residue protein sequence, read N- to C-terminus: Phosphoglycerate kinase (386 aa).

Residues 21-23 (DLN), Arg-36, 59-62 (HLGR), Arg-113, and Arg-146 each bind substrate. ATP contacts are provided by residues Lys-197, Glu-314, and 340 to 343 (GGDT).

This sequence belongs to the phosphoglycerate kinase family. Monomer.

Its subcellular location is the cytoplasm. It catalyses the reaction (2R)-3-phosphoglycerate + ATP = (2R)-3-phospho-glyceroyl phosphate + ADP. It functions in the pathway carbohydrate degradation; glycolysis; pyruvate from D-glyceraldehyde 3-phosphate: step 2/5. This Marinobacter nauticus (strain ATCC 700491 / DSM 11845 / VT8) (Marinobacter aquaeolei) protein is Phosphoglycerate kinase.